We begin with the raw amino-acid sequence, 339 residues long: UDP-glucose 4-epimerase (339 aa).

Residues Gly10–Ile12, Asp31–Asn35, Asp58–Leu59, Phe80, and Lys84 contribute to the NAD(+) site. Ser124 to Thr126 lines the substrate pocket. Residue Tyr148 is the Proton acceptor of the active site. NAD(+) contacts are provided by Lys152 and Tyr176. Substrate contacts are provided by residues Tyr176–Asn178, Asn197–Leu199, Arg230, and Arg291–Asp294.

The protein belongs to the NAD(P)-dependent epimerase/dehydratase family. Requires NAD(+) as cofactor.

The enzyme catalyses UDP-alpha-D-glucose = UDP-alpha-D-galactose. It carries out the reaction UDP-N-acetyl-alpha-D-glucosamine = UDP-N-acetyl-alpha-D-galactosamine. It participates in cell wall biogenesis; teichoic acid biosynthesis. Catalyzes two distinct but analogous reactions: the reversible epimerization of UDP-glucose to UDP-galactose and the reversible epimerization of UDP-N-acetylglucosamine to UDP-N-acetylgalactosamine. The enzyme is more efficient in catalyzing the interconversion between unacetylated than between corresponding N-acetylated substrates. Essential for growth in media containing either glucose or galactose. May protect the cell from the toxic effects of galactose and glucose or derivatives of both sugars. Involved in the biosynthesis of teichoic acids via the formation of UDP-N-acetylgalactosamine. Influences cell division. The protein is UDP-glucose 4-epimerase of Bacillus subtilis (strain 168).